The following is a 600-amino-acid chain: tRNA uridine 5-carboxymethylaminomethyl modification enzyme MnmG (600 aa).

Residue 10 to 15 (GGGHAG) coordinates FAD. A disordered region spans residues 216 to 239 (ADPQPRGFTGTPGPRAAESPTWQT). 267–281 (GPRYCPSIEDKVVKF) serves as a coordination point for NAD(+).

The protein belongs to the MnmG family. In terms of assembly, homodimer. Heterotetramer of two MnmE and two MnmG subunits. FAD serves as cofactor.

The protein localises to the cytoplasm. NAD-binding protein involved in the addition of a carboxymethylaminomethyl (cmnm) group at the wobble position (U34) of certain tRNAs, forming tRNA-cmnm(5)s(2)U34. The protein is tRNA uridine 5-carboxymethylaminomethyl modification enzyme MnmG of Deinococcus radiodurans (strain ATCC 13939 / DSM 20539 / JCM 16871 / CCUG 27074 / LMG 4051 / NBRC 15346 / NCIMB 9279 / VKM B-1422 / R1).